A 147-amino-acid chain; its full sequence is Small ribosomal subunit protein eS10B (147 aa).

Residues 90–147 (THKRQVRPAAPRAGRPEPRERSSAADAGYRRAEKKDDGAAPGGFAPSFRGGFGRPVAA) form a disordered region. A compositionally biased stretch (basic and acidic residues) spans 103-127 (GRPEPRERSSAADAGYRRAEKKDDG).

This sequence belongs to the eukaryotic ribosomal protein eS10 family. In terms of assembly, component of the small ribosomal subunit (SSU). Mature yeast ribosomes consist of a small (40S) and a large (60S) subunit. The 40S small subunit contains 1 molecule of ribosomal RNA (18S rRNA) and at least 33 different proteins. The large 60S subunit contains 3 rRNA molecules (25S, 5.8S and 5S rRNA) and at least 46 different proteins. eS10 interacts with GCN1 (via middle region); this interaction is direct and promotes GCN2 kinase activity.

Its subcellular location is the cytoplasm. In terms of biological role, component of the ribosome, a large ribonucleoprotein complex responsible for the synthesis of proteins in the cell. The small ribosomal subunit (SSU) binds messenger RNAs (mRNAs) and translates the encoded message by selecting cognate aminoacyl-transfer RNA (tRNA) molecules. The large subunit (LSU) contains the ribosomal catalytic site termed the peptidyl transferase center (PTC), which catalyzes the formation of peptide bonds, thereby polymerizing the amino acids delivered by tRNAs into a polypeptide chain. The nascent polypeptides leave the ribosome through a tunnel in the LSU and interact with protein factors that function in enzymatic processing, targeting, and the membrane insertion of nascent chains at the exit of the ribosomal tunnel. eS10 plays a role as a positive regulator of the GCN2 kinase activity by stimulating GCN1-mediated GCN2 activation. The polypeptide is Small ribosomal subunit protein eS10B (rps1002) (Schizosaccharomyces pombe (strain 972 / ATCC 24843) (Fission yeast)).